The primary structure comprises 171 residues: 3-hydroxydecanoyl-[acyl-carrier-protein] dehydratase (171 aa).

The active site involves His-70.

Belongs to the thioester dehydratase family. FabA subfamily. Homodimer.

Its subcellular location is the cytoplasm. The enzyme catalyses a (3R)-hydroxyacyl-[ACP] = a (2E)-enoyl-[ACP] + H2O. The catalysed reaction is (3R)-hydroxydecanoyl-[ACP] = (2E)-decenoyl-[ACP] + H2O. It carries out the reaction (2E)-decenoyl-[ACP] = (3Z)-decenoyl-[ACP]. It participates in lipid metabolism; fatty acid biosynthesis. Its function is as follows. Necessary for the introduction of cis unsaturation into fatty acids. Catalyzes the dehydration of (3R)-3-hydroxydecanoyl-ACP to E-(2)-decenoyl-ACP and then its isomerization to Z-(3)-decenoyl-ACP. Can catalyze the dehydratase reaction for beta-hydroxyacyl-ACPs with saturated chain lengths up to 16:0, being most active on intermediate chain length. In Pseudomonas fluorescens (strain Pf0-1), this protein is 3-hydroxydecanoyl-[acyl-carrier-protein] dehydratase.